A 305-amino-acid chain; its full sequence is Glycine--tRNA ligase alpha subunit (305 aa).

This sequence belongs to the class-II aminoacyl-tRNA synthetase family. As to quaternary structure, tetramer of two alpha and two beta subunits.

It is found in the cytoplasm. The catalysed reaction is tRNA(Gly) + glycine + ATP = glycyl-tRNA(Gly) + AMP + diphosphate. In Vibrio cholerae serotype O1 (strain ATCC 39315 / El Tor Inaba N16961), this protein is Glycine--tRNA ligase alpha subunit (glyQ).